The following is a 1249-amino-acid chain: Hyphally regulated cell wall protein 3 (1249 aa).

Positions 1–20 are cleaved as a signal peptide; that stretch reads MHLFKRIALTLWLIISSTLA. The N-linked (GlcNAc...) asparagine glycan is linked to N373. A compositionally biased stretch (low complexity) spans 383–415; the sequence is FPTTSQSSSSETVASSSQPDSSSTEPSAFPSST. 2 disordered regions span residues 383–729 and 883–1217; these read FPTT…SGII and GLST…SSAS. Residues 416–428 show a composition bias toward polar residues; sequence GDSSAEPSITSDY. Positions 429 to 716 are enriched in low complexity; the sequence is SSSELSVVPS…SEYTATWTTT (288 aa). A glycan (N-linked (GlcNAc...) asparagine) is linked at N681. Composition is skewed to polar residues over residues 717 to 729 and 883 to 935; these read NSDG…SGII and GLST…PVPT. Residues N891, N940, N944, N948, N952, N956, N960, N966, N970, N974, N984, N988, N992, N996, N1000, N1010, N1014, N1018, N1022, N1026, N1032, N1046, N1050, N1058, N1062, N1072, N1076, N1080, N1086, N1090, N1094, N1098, N1114, N1118, N1122, N1128, N1132, N1136, N1140, N1150, N1154, N1158, N1172, N1180, and N1186 are each glycosylated (N-linked (GlcNAc...) asparagine). Low complexity predominate over residues 941 to 959; that stretch reads GSNNGSDNGSNNGSNNGSN. Residues 960 to 982 are compositionally biased toward gly residues; sequence NGSGSGNGSNNGSNNGSGSGNGF. A compositionally biased stretch (low complexity) spans 983 to 1043; sequence NNGSDNGSNN…SNSGSDSGNG (61 aa). Positions 1062-1078 are enriched in gly residues; that stretch reads NGSGSGGESNNGSGNGS. A compositionally biased stretch (low complexity) spans 1079–1097; it reads DNGSSPDNGSNNGSNNGSN. A compositionally biased stretch (low complexity) spans 1139-1167; sequence NNGSNSGSNSDNGSNNSSGNGSSSDLGSV. Low complexity-rich tracts occupy residues 1175–1194 and 1205–1217; these read NEGS…GAGA and SPSA…SSAS. N1225 carries an N-linked (GlcNAc...) asparagine glycan. Residue N1225 is the site of GPI-anchor amidated asparagine attachment. The propeptide at 1226 to 1249 is removed in mature form; sequence GSGKLLNGKVLTLSVLSSMVVVFL.

It belongs to the HYR1/IFF family. The GPI-anchor is attached to the protein in the endoplasmic reticulum and serves to target the protein to the cell surface. There, the glucosamine-inositol phospholipid moiety is cleaved off and the GPI-modified mannoprotein is covalently attached via its lipidless GPI glycan remnant to the 1,6-beta-glucan of the outer cell wall layer.

Its subcellular location is the secreted. It is found in the cell wall. The protein resides in the membrane. GPI-anchored cell wall protein involved in cell wall organization, hyphal growth, as well as in host-fungal interaction and virulence. The sequence is that of Hyphally regulated cell wall protein 3 (HYR3) from Candida albicans (strain SC5314 / ATCC MYA-2876) (Yeast).